The chain runs to 668 residues: MAASEVAGLGAGTPSPSESSALCASKSDESLPDGLSPKDSAQKQKNLSPPSVSSQMITKESNRNAHLEHPEQNPGSSVGDTSAAHEEVVGENLVATALCLSGNGSQSDLKDLTNPAGEEGDTSLRESLHPVTRSLKAGCHSKQLASGNCSEEKCPAASVLKEGSRDAGLDLLPVVPPANGVEGVRVDQDDDQDSSSLKLSQNIAVQTDFKTADSEVNTDQDIEKNLDKMMTERTLLKERYQEVLDKQRQVESQLQVQLKQLQQRREEEMKNHQEILKAIQDVTIKREETKKKIEKEKKEFLQKEQDLKAEIEKLCEKGRREVWEMELDRLKNQDGEINRNIMEETERAWKAEILSLESRKELLVLKLEEAEKEAELHLTYLKSTPPTLETVRSKQEWETRLNGVRIMKKNVRDQFNSHIQLVRNGAKLSSLPQIPTPTLPPPPSEADFMLQVFQPSPSLTPRMPFSIGQVTMPMVMPSADPRSLSFPILNPALSQSSQPSPPLPGSHGRNSPGLGSLVSPHGPHMPPAASIPPPPGLGGIKASSETPRPQPVDKLEKILEKLLTRFPQCNKAQMTNILQQIKTARTTMAGLTMEELIQLVAARLAEHERVASSTQAPPTCKLCLMCQKLVQPSELHPMACTHALHKECIKFWAQTNTNDTCPFCPTLK.

Disordered regions lie at residues 1–87 (MAAS…AHEE) and 103–125 (NGSQSDLKDLTNPAGEEGDTSLR). Residue Ala-2 is modified to N-acetylalanine. Residues Ser-15, Ser-40, Ser-48, and Ser-54 each carry the phosphoserine modification. Over residues 43-59 (KQKNLSPPSVSSQMITK) the composition is skewed to polar residues. Residues 60-71 (ESNRNAHLEHPE) show a composition bias toward basic and acidic residues. At Ser-196 the chain carries Phosphoserine. A coiled-coil region spans residues 220–379 (QDIEKNLDKM…AEKEAELHLT (160 aa)). The segment at 486–552 (FPILNPALSQ…SSETPRPQPV (67 aa)) is disordered. Residues Ser-497, Ser-511, and Ser-516 each carry the phosphoserine modification. Residues 523 to 536 (PHMPPAASIPPPPG) are compositionally biased toward pro residues. The RING-type; atypical zinc finger occupies 623 to 665 (CLMCQKLVQPSELHPMACTHALHKECIKFWAQTNTNDTCPFCP).

The protein is RING finger protein 214 (Rnf214) of Mus musculus (Mouse).